Reading from the N-terminus, the 311-residue chain is ATP synthase subunit a (311 aa).

6 helical membrane-spanning segments follow: residues 62-82, 123-143, 170-190, 213-233, 253-273, and 276-296; these read AVHV…GFIF, IAPM…MDLI, DPNA…MFSI, LWYL…VALI, IFIL…VGGV, and WAWA…FMVL.

It belongs to the ATPase A chain family. In terms of assembly, F-type ATPases have 2 components, CF(1) - the catalytic core - and CF(0) - the membrane proton channel. CF(1) has five subunits: alpha(3), beta(3), gamma(1), delta(1), epsilon(1). CF(0) has three main subunits: a(1), b(2) and c(9-12). The alpha and beta chains form an alternating ring which encloses part of the gamma chain. CF(1) is attached to CF(0) by a central stalk formed by the gamma and epsilon chains, while a peripheral stalk is formed by the delta and b chains.

The protein localises to the cell inner membrane. In terms of biological role, key component of the proton channel; it plays a direct role in the translocation of protons across the membrane. In Saccharophagus degradans (strain 2-40 / ATCC 43961 / DSM 17024), this protein is ATP synthase subunit a.